Consider the following 294-residue polypeptide: Elongation factor Ts (294 aa).

Positions 82-85 (TDFV) are involved in Mg(2+) ion dislocation from EF-Tu.

The protein belongs to the EF-Ts family.

It localises to the cytoplasm. Associates with the EF-Tu.GDP complex and induces the exchange of GDP to GTP. It remains bound to the aminoacyl-tRNA.EF-Tu.GTP complex up to the GTP hydrolysis stage on the ribosome. This chain is Elongation factor Ts, found in Psychrobacter cryohalolentis (strain ATCC BAA-1226 / DSM 17306 / VKM B-2378 / K5).